The primary structure comprises 110 residues: Large ribosomal subunit protein uL23c (110 aa).

The protein belongs to the universal ribosomal protein uL23 family. In terms of assembly, part of the 50S ribosomal subunit.

The protein localises to the plastid. It is found in the chloroplast. Functionally, binds to 23S rRNA. The polypeptide is Large ribosomal subunit protein uL23c (rpl23) (Porphyra purpurea (Red seaweed)).